The chain runs to 439 residues: Cobyrinate a,c-diamide synthase (439 aa).

The tract at residues 214-235 (ETARAPPEVATTERNTGDSPAD) is disordered. Residues 237-428 (RVAVAQDSAF…CHCHGESGAF (192 aa)) enclose the GATase cobBQ-type domain. Cys317 (nucleophile) is an active-site residue.

Belongs to the CobB/CbiA family. It depends on Mg(2+) as a cofactor.

The enzyme catalyses cob(II)yrinate + 2 L-glutamine + 2 ATP + 2 H2O = cob(II)yrinate a,c diamide + 2 L-glutamate + 2 ADP + 2 phosphate + 2 H(+). It participates in cofactor biosynthesis; adenosylcobalamin biosynthesis; cob(II)yrinate a,c-diamide from sirohydrochlorin (anaerobic route): step 10/10. Its function is as follows. Catalyzes the ATP-dependent amidation of the two carboxylate groups at positions a and c of cobyrinate, using either L-glutamine or ammonia as the nitrogen source. In Haloarcula marismortui (strain ATCC 43049 / DSM 3752 / JCM 8966 / VKM B-1809) (Halobacterium marismortui), this protein is Cobyrinate a,c-diamide synthase.